We begin with the raw amino-acid sequence, 491 residues long: MAASYEEERDIQKNYWIEHSADLTVEAMMLDSRASDLDKEERPEVLSLLPPYEGKSVLELGAGIGRFTGELAQKAGELIALDFIDNVIKKNESINGHYKNVKFMCADVTSPDLKITDGSLDLIFSNWLLMYLSDKEVELLAERMVGWIKVGGYIFFRESCFHQSGDSKRKSNPTHYREPRFYSKVFQECQTRDAAGNSFELSMIGCKCIGAYVKNKKNQNQICWIWQKVSSENDRGFQRFLDNVQYKSSGILRYERVFGQGFVSTGGLETTKEFVEKMNLKPGQKVLDVGCGIGGGDFYMAEKFDVHVVGIDLSVNMISFALERAIGLSCSVEFEVADCTTKHYPDNSFDVIYSRDTILHIQDKPALFRTFFKWLKPGGKVLISDYCRSPKTPSAEFSEYIKQRGYDLHDVQAYGQMLKDAGFTDVIAEDRTDQFMQVLKRELDRVEKEKEKFISDFSKEDYDDIVGGWKSKLERCASDEQKWGLFIANKN.

Ala2 carries the N-acetylalanine modification. The S-adenosyl-L-homocysteine site is built by Gly61, Arg66, Asp82, Asp107, Val108, and Asn126. Residues Ser159, Ser164, Gly165, Arg169, and Tyr176 each coordinate phosphocholine. N-methylethanolamine phosphate contacts are provided by residues 245-246 and Tyr254; that span reads QY. Tyr254 contacts phosphocholine. The S-adenosyl-L-homocysteine site is built by Val263, Ser264, Gly290, Asp312, Asp338, Cys339, and Arg355. The phosphocholine site is built by Tyr386, Tyr400, Arg404, Tyr406, and Lys472. Residues Tyr386, Tyr400, 404–406, and Lys472 each bind N-methylethanolamine phosphate; that span reads RGY.

Belongs to the class I-like SAM-binding methyltransferase superfamily. PEAMT family. As to expression, highly expressed in the meristem and elongation zones of the root. Expressed in differentiated root epidermal cells. Highly expressed in leaf vasculature.

The protein resides in the cytoplasm. The catalysed reaction is phosphoethanolamine + S-adenosyl-L-methionine = N-methylethanolamine phosphate + S-adenosyl-L-homocysteine + H(+). The enzyme catalyses N-methylethanolamine phosphate + S-adenosyl-L-methionine = N,N-dimethylethanolamine phosphate + S-adenosyl-L-homocysteine + H(+). It carries out the reaction N,N-dimethylethanolamine phosphate + S-adenosyl-L-methionine = phosphocholine + S-adenosyl-L-homocysteine + H(+). It functions in the pathway phospholipid metabolism; phosphatidylcholine biosynthesis; phosphocholine from phosphoethanolamine: step 1/1. In terms of biological role, involved in phosphocholine biosynthesis. Catalyzes the N-methylation of phosphoethanolamine, phosphomonomethylethanolamine and phosphodimethylethanolamine, the three methylation steps required to convert phosphoethanolamine to phosphocholine (PC). Required for root system development and epidermal cell integrity through its role in choline and phospholipid metabolism. In association with NMT3, regulates PC homeostasis, phase transition at the shoot apex, coordinated organ development, and fertility. In association with NMT3, involved in phosphatidylcholine biosynthesis and vascular development. In association with NMT2, involved in the production of phosphatidylcholine in roots, essential for root development. In association with NMT2 produce phosphocholine mainly for leaf growth maintenance. Contributes to the regulation of overall root zonation dynamics through reactive oxygen species (ROS) and auxin-regulated cell differentiation. Participates in root development of primary root elongation under salt stress conditions by balancing reactive oxygen species (ROS) production and distribution through abscisic acid (ABA) signaling. This Arabidopsis thaliana (Mouse-ear cress) protein is Phosphoethanolamine N-methyltransferase 1.